The sequence spans 134 residues: Cytochrome b5 (134 aa).

N-acetylalanine is present on A2. K7, K10, and K19 each carry N6-acetyllysine. Positions 9 to 85 (VKYYTLEEIQ…SKTFIIGELH (77 aa)) constitute a Cytochrome b5 heme-binding domain. Heme-binding residues include H44 and H68. Residues 109–131 (WWTNWLIPAISALFVALIYHLYT) form a helical membrane-spanning segment.

Belongs to the cytochrome b5 family.

The protein localises to the endoplasmic reticulum membrane. The protein resides in the microsome membrane. Its function is as follows. Cytochrome b5 is a membrane-bound hemoprotein functioning as an electron carrier for several membrane-bound oxygenases. In Bos taurus (Bovine), this protein is Cytochrome b5 (CYB5A).